The primary structure comprises 28 residues: Unknown protein from spot 154 of 2D-PAGE of etiolated coleoptile (28 aa).

This is Unknown protein from spot 154 of 2D-PAGE of etiolated coleoptile from Zea mays (Maize).